Consider the following 183-residue polypeptide: Akirin-1B (183 aa).

The tract at residues 14 to 43 (EALMSPQSPKRRRCAPLPGSPATPSPQRCG) is disordered. The short motif at 180 to 183 (SYVS) is the SYVS motif element.

The protein belongs to the akirin family.

Its subcellular location is the nucleus. In terms of biological role, molecular adapter that acts as a bridge between proteins, and which is involved skeletal muscle development. Functions as a signal transducer for MSTN during skeletal muscle regeneration and myogenesis. The polypeptide is Akirin-1B (akirin1-b) (Xenopus laevis (African clawed frog)).